The sequence spans 660 residues: Protein NEDD1 (660 aa).

WD repeat units lie at residues 1 to 31 (MQEN…FNPH), 32 to 71 (TSPH…PVPL), 75 to 114 (AEGQ…VHRS), 117 to 156 (DHKD…SSTP), 160 to 200 (GSNQ…PYHN), 204 to 244 (VHKA…LVKT), 246 to 285 (VADT…SPVK), and 289 to 332 (AHKT…NAAS). S325 is modified (phosphoserine). Positions 369 to 411 (QEKAGLPRSINTDTLSKETDSGKNQDFSSFDDTGKSSLGDMFS) are disordered. T382 is modified (phosphothreonine; by PLK1). Residue S397 is modified to Phosphoserine; by PLK1. The residue at position 411 (S411) is a Phosphoserine. Position 426 is a phosphoserine; by PLK1 (S426). S468 and S516 each carry phosphoserine. Polar residues predominate over residues 507-523 (GAESGNLNTSPSSNQTR). Residues 507-532 (GAESGNLNTSPSSNQTRNSEKFEKPE) are disordered. T550 is modified (phosphothreonine; by CDK1). A Phosphoserine; by PLK1 modification is found at S637.

Interacts with FAM29A. Interacts with HSPA1A and HSPA1B. Interacts with gamma-tubulin in a HSPA1A/B-dependent manner. During mitosis, prior phosphorylation on Thr-550 by CDK1 promotes subsequent phosphorylation by PLK1 on Thr-382, Ser-397, Ser-426 and Ser-637. Phosphorylated NEDD1 can interact with gamma-tubulin for targeting the gamma-tubulin ring complex (gTuRC) to the centrosome, an important step for spindle formation.

Its subcellular location is the cytoplasm. The protein resides in the cytoskeleton. It is found in the microtubule organizing center. The protein localises to the centrosome. Required for mitosis progression. Promotes the nucleation of microtubules from the spindle. The sequence is that of Protein NEDD1 (NEDD1) from Homo sapiens (Human).